The sequence spans 155 residues: MVKLRLKRYGKRRQPTYRIVAIESKARREGRPLEELGYYNPRTKETVLETAGLLKWLRCGAQPTDTVDSLLRKAGIYEMLKAGEGGVVAAIRIPAIAKPEAGIPDPAPSTEEPAAVCEASAEMAGQPGEVEPAGAAAEPNSQEPEPEEEKPQVEA.

Residues 100–155 (EAGIPDPAPSTEEPAAVCEASAEMAGQPGEVEPAGAAAEPNSQEPEPEEEKPQVEA) form a disordered region. Residues 124–143 (AGQPGEVEPAGAAAEPNSQE) are compositionally biased toward low complexity.

It belongs to the bacterial ribosomal protein bS16 family.

The chain is Small ribosomal subunit protein bS16 from Synechococcus sp. (strain JA-3-3Ab) (Cyanobacteria bacterium Yellowstone A-Prime).